The chain runs to 228 residues: Prolactin-2A1 (228 aa).

Positions 1-29 (MQLSITHPCCWTLRLLLVSNLLLWENVAL) are cleaved as a signal peptide. 2 cysteine pairs are disulfide-bonded: cysteine 87/cysteine 203 and cysteine 220/cysteine 228.

The protein belongs to the somatotropin/prolactin family. In terms of tissue distribution, expressed specifically in the placenta. Highly expressed in invasive trophoblast cells lining the central placental vessel.

The protein localises to the secreted. The sequence is that of Prolactin-2A1 (Prl2a1) from Rattus norvegicus (Rat).